Reading from the N-terminus, the 427-residue chain is Glutamate-1-semialdehyde 2,1-aminomutase (427 aa).

An N6-(pyridoxal phosphate)lysine modification is found at lysine 265.

This sequence belongs to the class-III pyridoxal-phosphate-dependent aminotransferase family. HemL subfamily. Homodimer. Requires pyridoxal 5'-phosphate as cofactor.

It localises to the cytoplasm. The enzyme catalyses (S)-4-amino-5-oxopentanoate = 5-aminolevulinate. It participates in porphyrin-containing compound metabolism; protoporphyrin-IX biosynthesis; 5-aminolevulinate from L-glutamyl-tRNA(Glu): step 2/2. This is Glutamate-1-semialdehyde 2,1-aminomutase from Burkholderia ambifaria (strain MC40-6).